We begin with the raw amino-acid sequence, 280 residues long: DegV domain-containing protein spyM18_1709 (280 aa).

The region spanning Trp3–Ile280 is the DegV domain. Residues Ser63 and Ser91 each coordinate hexadecanoate.

In terms of biological role, may bind long-chain fatty acids, such as palmitate, and may play a role in lipid transport or fatty acid metabolism. This is DegV domain-containing protein spyM18_1709 from Streptococcus pyogenes serotype M18 (strain MGAS8232).